Reading from the N-terminus, the 103-residue chain is Histone H4.2 (103 aa).

The segment covering 1–14 has biased composition (gly residues); it reads MSGRGKGGKGLGKG. The tract at residues 1–20 is disordered; the sequence is MSGRGKGGKGLGKGGAKRHR. Lys6 bears the N6-acetyl-N6-methyllysine; alternate mark. Lys6, Lys9, and Lys13 each carry N6-methyllysine; alternate. N6-acetyl-N6-methyllysine; alternate is present on Lys13. Residues 17-21 mediate DNA binding; the sequence is KRHRK. Position 92 is an N6-glutaryllysine (Lys92).

Belongs to the histone H4 family. As to quaternary structure, the nucleosome is a histone octamer containing two molecules each of H2A, H2B, H3 and H4 assembled in one H3-H4 heterotetramer and two H2A-H2B heterodimers. The octamer wraps approximately 147 bp of DNA. Glutarylation at Lys-92 (H4K91glu) destabilizes nucleosomes by promoting dissociation of the H2A-H2B dimers from nucleosomes.

It is found in the nucleus. The protein localises to the chromosome. Functionally, core component of nucleosome. Nucleosomes wrap and compact DNA into chromatin, limiting DNA accessibility to the cellular machineries which require DNA as a template. Histones thereby play a central role in transcription regulation, DNA repair, DNA replication and chromosomal stability. DNA accessibility is regulated via a complex set of post-translational modifications of histones, also called histone code, and nucleosome remodeling. This Emericella nidulans (strain FGSC A4 / ATCC 38163 / CBS 112.46 / NRRL 194 / M139) (Aspergillus nidulans) protein is Histone H4.2 (hhfB).